We begin with the raw amino-acid sequence, 242 residues long: Myb-related protein MYBAS2 (242 aa).

HTH myb-type domains are found at residues 5 to 61 (REEI…HPGL) and 62 to 112 (KRGR…RKKA). Residues 33 to 57 (WDFIAKVSGLNRTGKSCRLRWVNYL) constitute a DNA-binding region (H-T-H motif). Residues 62–65 (KRGR) carry the Bipartite nuclear localization signal 1 motif. A DNA-binding region (H-T-H motif) is located at residues 85–108 (WSRIARRLPGRTDNEIKNYWRTHM). Positions 109-117 (RKKAQERKS) match the Bipartite nuclear localization signal 2 motif. The segment at 110 to 133 (KKAQERKSNMSPSSSSSSLTYQSC) is disordered. A compositionally biased stretch (low complexity) spans 118 to 133 (NMSPSSSSSSLTYQSC).

It localises to the nucleus. Its function is as follows. Transcription factor. The sequence is that of Myb-related protein MYBAS2 (MYBAS2) from Oryza sativa subsp. japonica (Rice).